A 217-amino-acid chain; its full sequence is Flagellar L-ring protein 2 (217 aa).

A signal peptide spans 1–15; the sequence is MRILLALTWLAWLGA. Residue C16 is the site of N-palmitoyl cysteine attachment. A lipid anchor (S-diacylglycerol cysteine) is attached at C16.

Belongs to the FlgH family. In terms of assembly, the basal body constitutes a major portion of the flagellar organelle and consists of four rings (L,P,S, and M) mounted on a central rod.

It localises to the cell outer membrane. The protein localises to the bacterial flagellum basal body. Functionally, assembles around the rod to form the L-ring and probably protects the motor/basal body from shearing forces during rotation. The protein is Flagellar L-ring protein 2 of Burkholderia thailandensis (strain ATCC 700388 / DSM 13276 / CCUG 48851 / CIP 106301 / E264).